Consider the following 429-residue polypeptide: Glutamate-1-semialdehyde 2,1-aminomutase 2 (429 aa).

Residue lysine 268 is modified to N6-(pyridoxal phosphate)lysine.

This sequence belongs to the class-III pyridoxal-phosphate-dependent aminotransferase family. HemL subfamily. As to quaternary structure, homodimer. The cofactor is pyridoxal 5'-phosphate.

Its subcellular location is the cytoplasm. The enzyme catalyses (S)-4-amino-5-oxopentanoate = 5-aminolevulinate. Its pathway is porphyrin-containing compound metabolism; protoporphyrin-IX biosynthesis; 5-aminolevulinate from L-glutamyl-tRNA(Glu): step 2/2. The chain is Glutamate-1-semialdehyde 2,1-aminomutase 2 from Bacillus thuringiensis (strain Al Hakam).